Consider the following 544-residue polypeptide: GMP synthase [glutamine-hydrolyzing] (544 aa).

The Glutamine amidotransferase type-1 domain maps to Thr12 to Gly210. Cys88 acts as the Nucleophile in catalysis. Residues His184 and Glu186 contribute to the active site. One can recognise a GMPS ATP-PPase domain in the interval Trp211 to Arg419. Residue Ser239 to Thr245 coordinates ATP. Residues Arg312, Asp481, Lys536, and Glu542 each contribute to the XMP site.

As to quaternary structure, homodimer. Also forms a small population of homotetramers. It depends on Mg(2+) as a cofactor.

Its subcellular location is the cytoplasm. It localises to the cytosol. It carries out the reaction XMP + L-glutamine + ATP + H2O = GMP + L-glutamate + AMP + diphosphate + 2 H(+). It participates in purine metabolism; GMP biosynthesis; GMP from XMP (L-Gln route): step 1/1. With respect to regulation, the enzyme is inhibited by ECC1385; although this compound fails to inhibit growth of the organism. Its function is as follows. Catalyzes the conversion of xanthine monophosphate (XMP) to GMP in the presence of glutamine and ATP through an adenyl-XMP intermediate. This chain is GMP synthase [glutamine-hydrolyzing], found in Cryptococcus neoformans var. grubii serotype A (strain H99 / ATCC 208821 / CBS 10515 / FGSC 9487) (Filobasidiella neoformans var. grubii).